Consider the following 805-residue polypeptide: Phenylalanine--tRNA ligase beta subunit (805 aa).

A tRNA-binding domain is found at Ala-39–Arg-148. The 76-residue stretch at Pro-399 to Asp-474 folds into the B5 domain. Mg(2+) contacts are provided by Asp-452, Asp-458, Glu-461, and Glu-462. The region spanning Ser-703–Arg-804 is the FDX-ACB domain.

The protein belongs to the phenylalanyl-tRNA synthetase beta subunit family. Type 1 subfamily. As to quaternary structure, tetramer of two alpha and two beta subunits. Requires Mg(2+) as cofactor.

Its subcellular location is the cytoplasm. The catalysed reaction is tRNA(Phe) + L-phenylalanine + ATP = L-phenylalanyl-tRNA(Phe) + AMP + diphosphate + H(+). In Bordetella pertussis (strain Tohama I / ATCC BAA-589 / NCTC 13251), this protein is Phenylalanine--tRNA ligase beta subunit.